Consider the following 727-residue polypeptide: MSSYQQNPIGSFGGLYGSGGIEKSSQIIGNYRLDKTLGIGSFGKVKLAEHIRTGVKVAIKILNRTKIKNLKMDEKIRREIQNMKLFRHPHIIKLYEVIETTTDIFMVMEYVTGGELFEYIVKNGKLLEDESRRLFQQMISGVDYCHHHMVVHRDLKPENLLLDPINKCIKIADFGLSNMMQDGDFLKTSCGSPNYAAPEVISGKLYAGPEVDVWSCGVILYAFLCAKLPFDDESIPMLFKKIREGVFSIPDFVSPSCADLIKKMLVVDPVKRITIHEIRNHPWFQVKLPKYLSSPHTFLSKSIQTINNSILNEMVQVYAPIDRERIIEELQKSGEVNDLIVSYHLLVDSKRGSYENEINSPNLVSPITTPIMSSAQKSPIMFTTTTGFNPSNSNSISNNNNNNNNNNNNTTNNNNNTTNNNNSIINNNNINNNNINNNNNNNNNNINNNNIINNNNNNNNNNNNNNNNNNNNNNNNNNNSSISGGTEVFSISPNLNNSYNSNSSGNSNGSNSNNNSNNNTNNDNNNNNNNNNNNNNNNNNNNNNNNNNNNCIDSVNNSLNNENDVNNSNINNNNNNNSDDGSNNNSYEGGGDVLLLSDLNGNNQLGGNDNGNVVNLNNNFQLLNSLDLNSDIQTQPHRKWYLGAISQLPPHEIMGEIYRALKKVGFEWKLTGPYQLRCRMVNGKPIKLVLQLFRVAENRYLLDIKKIEGEIFIFFDICSLMLEELNL.

Residues tyrosine 31–phenylalanine 284 enclose the Protein kinase domain. ATP-binding positions include leucine 37–valine 45 and lysine 60. Aspartate 154 acts as the Proton acceptor in catalysis. Threonine 188 is modified (phosphothreonine). Residues phenylalanine 382–glycine 590 form a disordered region. Low complexity-rich tracts occupy residues serine 391–serine 483 and asparagine 494–serine 586. The KA1 domain maps to arginine 679 to leucine 727.

The protein belongs to the protein kinase superfamily. CAMK Ser/Thr protein kinase family. SNF1 subfamily. As to quaternary structure, heterotrimer of an alpha catalytic subunit, a beta and a gamma non-catalytic subunits.

The catalysed reaction is L-seryl-[protein] + ATP = O-phospho-L-seryl-[protein] + ADP + H(+). It carries out the reaction L-threonyl-[protein] + ATP = O-phospho-L-threonyl-[protein] + ADP + H(+). In terms of biological role, activated enzyme phosphorylates target proteins and initiates downstream signaling pathways that shift metabolism from anabolic to catabolic pathways. Acts as a highly sensitive cellular energy sensor. This chain is 5'-AMP-activated serine/threonine-protein kinase catalytic subunit alpha (snfA), found in Dictyostelium discoideum (Social amoeba).